We begin with the raw amino-acid sequence, 261 residues long: Enolase-phosphatase E1 (261 aa).

Positions 16 and 18 each coordinate Mg(2+). Residues 153–154 (SS) and K187 contribute to the substrate site. Residue D212 participates in Mg(2+) binding.

The protein belongs to the HAD-like hydrolase superfamily. MasA/MtnC family. As to quaternary structure, monomer. The cofactor is Mg(2+).

The protein localises to the cytoplasm. It localises to the nucleus. The catalysed reaction is 5-methylsulfanyl-2,3-dioxopentyl phosphate + H2O = 1,2-dihydroxy-5-(methylsulfanyl)pent-1-en-3-one + phosphate. It participates in amino-acid biosynthesis; L-methionine biosynthesis via salvage pathway; L-methionine from S-methyl-5-thio-alpha-D-ribose 1-phosphate: step 3/6. It functions in the pathway amino-acid biosynthesis; L-methionine biosynthesis via salvage pathway; L-methionine from S-methyl-5-thio-alpha-D-ribose 1-phosphate: step 4/6. Its function is as follows. Bifunctional enzyme that catalyzes the enolization of 2,3-diketo-5-methylthiopentyl-1-phosphate (DK-MTP-1-P) into the intermediate 2-hydroxy-3-keto-5-methylthiopentenyl-1-phosphate (HK-MTPenyl-1-P), which is then dephosphorylated to form the acireductone 1,2-dihydroxy-3-keto-5-methylthiopentene (DHK-MTPene). This Salmo salar (Atlantic salmon) protein is Enolase-phosphatase E1 (enoph1).